The primary structure comprises 1142 residues: Melanoma-associated antigen C1 (1142 aa).

A disordered region spans residues 1–132 (MGDKDMPTAG…DVQSPLQNPA (132 aa)). Residues 13-42 (SLLQSSSESPQSCPEGEDSQSPLQIPQSSP) are compositionally biased toward low complexity. Ser63 carries the post-translational modification Phosphoserine. The span at 76-87 (SQSPLQIPQSSP) shows a compositional bias: low complexity. Over residues 92-103 (TQSPLQNSQSSP) the composition is skewed to polar residues. Phosphoserine is present on residues Ser207 and Ser382. 2 disordered regions span residues 502–778 (TQST…LQRP) and 791–893 (LQSS…SLTD). Residues 614-626 (SPLQGEEFQSSLQ) are compositionally biased toward polar residues. Over residues 627 to 659 (SPVSICSSSTPSSLPQSFPESSQSPPEGPVQSP) the composition is skewed to low complexity. Residues 671 to 680 (HSQSPLQSPE) show a composition bias toward polar residues. Composition is skewed to low complexity over residues 741 to 762 (QSPV…FPES) and 807 to 889 (QSPL…LESD). The MAGE domain occupies 908-1106 (LDEKVDELAR…ITFPSSYKDA (199 aa)). Residue Ser1063 is modified to Phosphoserine. Residues 1118-1142 (IDTTDDSTATESASSSVMSPSFSSE) form a disordered region. The span at 1123–1142 (DSTATESASSSVMSPSFSSE) shows a compositional bias: low complexity.

In terms of tissue distribution, expressed in testis and in tumors of a wide variety of histologic types.

The protein localises to the cytoplasm. In Homo sapiens (Human), this protein is Melanoma-associated antigen C1 (MAGEC1).